A 486-amino-acid chain; its full sequence is Glycogen synthase (486 aa).

An ADP-alpha-D-glucose-binding site is contributed by Lys15.

Belongs to the glycosyltransferase 1 family. Bacterial/plant glycogen synthase subfamily.

It catalyses the reaction [(1-&gt;4)-alpha-D-glucosyl](n) + ADP-alpha-D-glucose = [(1-&gt;4)-alpha-D-glucosyl](n+1) + ADP + H(+). It functions in the pathway glycan biosynthesis; glycogen biosynthesis. Its function is as follows. Synthesizes alpha-1,4-glucan chains using ADP-glucose. The sequence is that of Glycogen synthase from Thermotoga maritima (strain ATCC 43589 / DSM 3109 / JCM 10099 / NBRC 100826 / MSB8).